A 188-amino-acid chain; its full sequence is Peptidyl-tRNA hydrolase (188 aa).

Tyr-14 lines the tRNA pocket. His-19 acts as the Proton acceptor in catalysis. Positions 60 and 62 each coordinate tRNA.

Belongs to the PTH family. In terms of assembly, monomer.

Its subcellular location is the cytoplasm. The catalysed reaction is an N-acyl-L-alpha-aminoacyl-tRNA + H2O = an N-acyl-L-amino acid + a tRNA + H(+). Hydrolyzes ribosome-free peptidyl-tRNAs (with 1 or more amino acids incorporated), which drop off the ribosome during protein synthesis, or as a result of ribosome stalling. Its function is as follows. Catalyzes the release of premature peptidyl moieties from peptidyl-tRNA molecules trapped in stalled 50S ribosomal subunits, and thus maintains levels of free tRNAs and 50S ribosomes. The chain is Peptidyl-tRNA hydrolase from Mycoplasmopsis agalactiae (strain NCTC 10123 / CIP 59.7 / PG2) (Mycoplasma agalactiae).